The sequence spans 203 residues: Large ribosomal subunit protein uL22 (203 aa).

Composition is skewed to polar residues over residues 116–126 (QNGGESQNQEY) and 134–167 (VSKS…DSQL). The tract at residues 116-203 (QNGGESQNQE…TVLAQEKEVK (88 aa)) is disordered. The segment covering 168–194 (SAKTNSTTTAKKTDLADNNTKNDATNT) has biased composition (low complexity).

This sequence belongs to the universal ribosomal protein uL22 family. In terms of assembly, part of the 50S ribosomal subunit.

Its function is as follows. This protein binds specifically to 23S rRNA; its binding is stimulated by other ribosomal proteins, e.g. L4, L17, and L20. It is important during the early stages of 50S assembly. It makes multiple contacts with different domains of the 23S rRNA in the assembled 50S subunit and ribosome. Functionally, the globular domain of the protein is located near the polypeptide exit tunnel on the outside of the subunit, while an extended beta-hairpin is found that lines the wall of the exit tunnel in the center of the 70S ribosome. The polypeptide is Large ribosomal subunit protein uL22 (Mesomycoplasma hyopneumoniae (strain 232) (Mycoplasma hyopneumoniae)).